The sequence spans 1205 residues: MVLLSLWLIAAALVEVRTSADGQAGNEEMVQIDLPIKRYREYELVTPVSTNLEGRYLSHTLSASHKKRSARDVSSNPEQLFFNITAFGKDFHLRLKPNTQLVAPGAVVEWHETSLVPGNITDPINNHQPGSATYRIRRTEPLQTNCAYVGDIVDIPGTSVAISNCDGLAGMIKSDNEEYFIEPLERGKQMEEEKGRIHVVYKRSAVEQAPIDMSKDFHYRESDLEGLDDLGTVYGNIHQQLNETMRRRRHAGENDYNIEVLLGVDDSVVRFHGKEHVQNYLLTLMNIVNEIYHDESLGVHINVVLVRMIMLGYAKSISLIERGNPSRSLENVCRWASQQQRSDLNHSEHHDHAIFLTRQDFGPAGMQGYAPVTGMCHPVRSCTLNHEDGFSSAFVVAHETGHVLGMEHDGQGNRCGDETAMGSVMAPLVQAAFHRYHWSRCSGQELKRYIHSYDCLLDDPFDHDWPKLPELPGINYSMDEQCRFDFGVGYKMCTAFRTFDPCKQLWCSHPDNPYFCKTKKGPPLDGTECAAGKWCYKGHCMWKNANQQKQDGNWGSWTKFGSCSRTCGTGVRFRTRQCNNPMPINGGQDCPGVNFEYQLCNTEECQKHFEDFRAQQCQQRNSHFEYQNTKHHWLPYEHPDPKKRCHLYCQSKETGDVAYMKQLVHDGTHCSYKDPYSICVRGECVKVGCDKEIGSNKVEDKCGVCGGDNSHCRTVKGTFTRTPRKLGYLKMFDIPPGARHVLIQEDEASPHILAIKNQATGHYILNGKGEEAKSRTFIDLGVEWDYNIEDDIESLHTDGPLHDPVIVLIIPQENDTRSSLTYKYIIHEDSVPTINSNNVIQEELDTFEWALKSWSQCSKPCGGGFQYTKYGCRRKSDNKMVHRSFCEANKKPKPIRRMCNIQECTHPLWVAEEWEHCTKTCGSSGYQLRTVRCLQPLLDGTNRSVHSKYCMGDRPESRRPCNRVPCPAQWKTGPWSECSVTCGEGTEVRQVLCRAGDHCDGEKPESVRACQLPPCNDEPCLGDKSIFCQMEVLARYCSIPGYNKLCCESCSKRSSTLPPPYLLEAAETHDDVISNPSDLPRSLVMPTSLVPYHSETPAKKMSLSSISSVGGPNAYAAFRPNSKPDGANLRQRSAQQAGSKTVRLVTVPSSPPTKRVHLSSASQMAAASFFAASDSIGASSQARTSKKDGKIIDNRRPTRSSTLER.

The N-terminal stretch at 1–20 (MVLLSLWLIAAALVEVRTSA) is a signal peptide. Residues 21–249 (DGQAGNEEMV…QLNETMRRRR (229 aa)) constitute a propeptide that is removed on maturation. Asn83, Asn119, Asn242, and Asn345 each carry an N-linked (GlcNAc...) asparagine glycan. The Peptidase M12B domain occupies 256–460 (YNIEVLLGVD…HSYDCLLDDP (205 aa)). Disulfide bonds link Cys333–Cys382, Cys376–Cys455, and Cys415–Cys441. His398 lines the Zn(2+) pocket. Residue Glu399 is part of the active site. 2 residues coordinate Zn(2+): His402 and His408. One can recognise a Disintegrin domain in the interval 470 to 550 (ELPGINYSMD…MWKNANQQKQ (81 aa)). N-linked (GlcNAc...) asparagine glycosylation is present at Asn475. Intrachain disulfides connect Cys482/Cys507, Cys493/Cys516, Cys502/Cys535, Cys529/Cys540, Cys563/Cys600, Cys567/Cys605, and Cys578/Cys590. One can recognise a TSP type-1 1 domain in the interval 551–606 (DGNWGSWTKFGSCSRTCGTGVRFRTRQCNNPMPINGGQDCPGVNFEYQLCNTEECQ). Positions 713-844 (RTVKGTFTRT…NSNNVIQEEL (132 aa)) are spacer. Residue Asn814 is glycosylated (N-linked (GlcNAc...) asparagine). TSP type-1 domains are found at residues 845 to 905 (DTFE…QECT), 906 to 965 (HPLW…NRVP), and 966 to 1014 (CPAQ…QLPP). Asn942 carries an N-linked (GlcNAc...) asparagine glycan. 3 disulfide bridges follow: Cys978/Cys1010, Cys982/Cys1015, and Cys993/Cys999. Residues 1015-1054 (CNDEPCLGDKSIFCQMEVLARYCSIPGYNKLCCESCSKRS) form the PLAC domain. The segment at 1174-1205 (DSIGASSQARTSKKDGKIIDNRRPTRSSTLER) is disordered. Residues 1185–1205 (SKKDGKIIDNRRPTRSSTLER) show a composition bias toward basic and acidic residues.

The cofactor is Zn(2+). In terms of processing, the precursor is cleaved by a furin endopeptidase. Post-translationally, glycosylated. Can be O-fucosylated by POFUT2 on a serine or a threonine residue found within the consensus sequence C1-X(2)-(S/T)-C2-G of the TSP type-1 repeat domains where C1 and C2 are the first and second cysteine residue of the repeat, respectively. Fucosylated repeats can then be further glycosylated by the addition of a beta-1,3-glucose residue by the glucosyltransferase, B3GALTL. Fucosylation mediates the efficient secretion of ADAMTS family members. Can also be C-glycosylated with one or two mannose molecules on tryptophan residues within the consensus sequence W-X-X-W of the TPRs, and N-glycosylated. These other glycosylations can also facilitate secretion. In terms of tissue distribution, found in cartilage and skin.

It is found in the secreted. It localises to the extracellular space. The protein resides in the extracellular matrix. In terms of biological role, cleaves the propeptides of type II collagen prior to fibril assembly. Does not act on types I and III collagens. This Homo sapiens (Human) protein is A disintegrin and metalloproteinase with thrombospondin motifs 3 (ADAMTS3).